The chain runs to 611 residues: Pescadillo homolog (611 aa).

Positions 310-335 (VQMGDPDEASPGEEEQFVAHASKSAP) are disordered. The span at 314–325 (DPDEASPGEEEQ) shows a compositional bias: acidic residues. The region spanning 354–455 (PSSRLFAPYT…KILLEDTYAQ (102 aa)) is the BRCT domain. Disordered regions lie at residues 469 to 506 (YEGAYDPTAATNDADMDVETDGEEGEADASGDEKESNT) and 545 to 611 (VKKA…AGGK). Acidic residues predominate over residues 482–498 (ADMDVETDGEEGEADAS). Composition is skewed to basic and acidic residues over residues 552 to 569 (KKPDTASKATEEAEKDMN) and 579 to 602 (KLYEKMKYSQQKKAAEKEKLEQRK). Residues 580 to 609 (LYEKMKYSQQKKAAEKEKLEQRKKQLQKAG) adopt a coiled-coil conformation.

It belongs to the pescadillo family. Component of the NOP7 complex, composed of ERB1, NOP7 and YTM1. The complex is held together by ERB1, which interacts with NOP7 via its N-terminal domain and with YTM1 via a high-affinity interaction between the seven-bladed beta-propeller domains of the 2 proteins. The NOP7 complex associates with the 66S pre-ribosome.

It localises to the nucleus. The protein resides in the nucleolus. It is found in the nucleoplasm. Functionally, component of the NOP7 complex, which is required for maturation of the 25S and 5.8S ribosomal RNAs and formation of the 60S ribosome. The sequence is that of Pescadillo homolog from Coprinopsis cinerea (strain Okayama-7 / 130 / ATCC MYA-4618 / FGSC 9003) (Inky cap fungus).